A 318-amino-acid polypeptide reads, in one-letter code: MSMPGINVSNLLNEHEELGLRLLAGEKGLTNRINMSEINRPGLSLTGFYESFAHDRIQIFGKGEWAYITSRIPEDLKNIAADFFSFHLNCIIFTHGNMPPPIFTENCERLAIPLMISDVSTHKFITLISGILDRSLAPRTMRHGVLIEVFGIGILLSGKSGVGKSETALELIERGHRLVADDMVEIRRLSESYLIGTCSDLLRHHMEIRGLGILNIKDIFGIGSVRDHKLIELIIRLEEWTEDKDFDRTGLENPTEELLGVQIPLIRVPVKPGRNIPIIVETAAMNQRLRKLGKNAAQEFNQKLSNYLQQGKVERNPP.

Active-site residues include His-143 and Lys-164. Position 158–165 (158–165) interacts with ATP; the sequence is GKSGVGKS. Position 165 (Ser-165) interacts with Mg(2+). The Proton acceptor; for phosphorylation activity. Proton donor; for dephosphorylation activity role is filled by Asp-182. The important for the catalytic mechanism of both phosphorylation and dephosphorylation stretch occupies residues 206–215; it reads MEIRGLGILN. Glu-207 contacts Mg(2+). The active site involves Arg-248. The important for the catalytic mechanism of dephosphorylation stretch occupies residues 269-274; sequence PVKPGR.

Belongs to the HPrK/P family. In terms of assembly, homohexamer. Requires Mg(2+) as cofactor.

The enzyme catalyses [HPr protein]-L-serine + ATP = [HPr protein]-O-phospho-L-serine + ADP + H(+). It catalyses the reaction [HPr protein]-O-phospho-L-serine + phosphate + H(+) = [HPr protein]-L-serine + diphosphate. Catalyzes the ATP- as well as the pyrophosphate-dependent phosphorylation of a specific serine residue in HPr, a phosphocarrier protein of the phosphoenolpyruvate-dependent sugar phosphotransferase system (PTS). HprK/P also catalyzes the pyrophosphate-producing, inorganic phosphate-dependent dephosphorylation (phosphorolysis) of seryl-phosphorylated HPr (P-Ser-HPr). The sequence is that of HPr kinase/phosphorylase from Leptospira borgpetersenii serovar Hardjo-bovis (strain JB197).